We begin with the raw amino-acid sequence, 40 residues long: Photosystem II reaction center protein J (40 aa).

A helical transmembrane segment spans residues 8–28 (IPLWLIGTVTGIIVIGLLGVF).

Belongs to the PsbJ family. In terms of assembly, PSII is composed of 1 copy each of membrane proteins PsbA, PsbB, PsbC, PsbD, PsbE, PsbF, PsbH, PsbI, PsbJ, PsbK, PsbL, PsbM, PsbT, PsbX, PsbY, PsbZ, Psb30/Ycf12, at least 3 peripheral proteins of the oxygen-evolving complex and a large number of cofactors. It forms dimeric complexes.

Its subcellular location is the plastid. It is found in the chloroplast thylakoid membrane. One of the components of the core complex of photosystem II (PSII). PSII is a light-driven water:plastoquinone oxidoreductase that uses light energy to abstract electrons from H(2)O, generating O(2) and a proton gradient subsequently used for ATP formation. It consists of a core antenna complex that captures photons, and an electron transfer chain that converts photonic excitation into a charge separation. This is Photosystem II reaction center protein J from Pinus thunbergii (Japanese black pine).